We begin with the raw amino-acid sequence, 81 residues long: Large ribosomal subunit protein bL31B (81 aa).

Belongs to the bacterial ribosomal protein bL31 family. Type B subfamily. In terms of assembly, part of the 50S ribosomal subunit.

This chain is Large ribosomal subunit protein bL31B, found in Borreliella afzelii (strain PKo) (Borrelia afzelii).